The chain runs to 474 residues: MSKKLHIKTWGCQMNEYDSSKMADLLGEYQGYTLTEEASEADILLLNTCSIREKAQEKVFHQLGRWKTLKDKNPNLIIGVGGCVASQEGKAIKDRAQCVDIIFGPQTLHRLPEMIEQVRRGDKAVIDISFPEIEKFDRLPEPRAEGPTAFVSIMEGCSKYCSFCVVPYTRGEEVSRPSDDIILEIAQLAEQGVREVNLLGQNVNAYRGATHDGAICTFAELLRFVAAIDGIDRIRFTTSHPIEFTQDIIDVYEDTPELVSFLHLPVQSGSDRILTAMKRGHMAIEYKSIIRRLRKAREGIQISSDFIIGFPGETKEDFADTMKLIEDIGFDHSFSFIYSARPGTPAADLPDNVDMEEKKQRLAILQDRITQQAMRYSRHMMGTVQRILVEGPSVKNPMELRGRTENNRVVNFEGQPKHIGTFVDVEIVDVYTNSLRGVFIRGEDEMDLRRSLRPAEILAKRKQDDELGVTQFKP.

The 118-residue stretch at 3–120 folds into the MTTase N-terminal domain; that stretch reads KKLHIKTWGC…LPEMIEQVRR (118 aa). [4Fe-4S] cluster contacts are provided by Cys-12, Cys-49, Cys-83, Cys-157, Cys-161, and Cys-164. Residues 143-375 enclose the Radical SAM core domain; the sequence is RAEGPTAFVS…QDRITQQAMR (233 aa). In terms of domain architecture, TRAM spans 378–441; the sequence is RHMMGTVQRI…TNSLRGVFIR (64 aa).

Belongs to the methylthiotransferase family. MiaB subfamily. Monomer. [4Fe-4S] cluster is required as a cofactor.

The protein resides in the cytoplasm. It catalyses the reaction N(6)-dimethylallyladenosine(37) in tRNA + (sulfur carrier)-SH + AH2 + 2 S-adenosyl-L-methionine = 2-methylsulfanyl-N(6)-dimethylallyladenosine(37) in tRNA + (sulfur carrier)-H + 5'-deoxyadenosine + L-methionine + A + S-adenosyl-L-homocysteine + 2 H(+). Its function is as follows. Catalyzes the methylthiolation of N6-(dimethylallyl)adenosine (i(6)A), leading to the formation of 2-methylthio-N6-(dimethylallyl)adenosine (ms(2)i(6)A) at position 37 in tRNAs that read codons beginning with uridine. This Shewanella baltica (strain OS185) protein is tRNA-2-methylthio-N(6)-dimethylallyladenosine synthase.